Here is a 328-residue protein sequence, read N- to C-terminus: P2Y purinoceptor 3 (328 aa).

Residues Met1–Val22 lie on the Extracellular side of the membrane. N-linked (GlcNAc...) asparagine glycosylation occurs at Asn5. Residues Leu23–Ile43 traverse the membrane as a helical segment. The Cytoplasmic portion of the chain corresponds to Gly44 to Thr57. The helical transmembrane segment at Ile58–Ile78 threads the bilayer. At Tyr79–Phe96 the chain is on the extracellular side. Cys94 and Cys172 are joined by a disulfide. A helical transmembrane segment spans residues Val97 to Val117. The Cytoplasmic segment spans residues Gln118–Thr139. The chain crosses the membrane as a helical span at residues Trp140–Phe160. Over Ala161 to Ile189 the chain is Extracellular. Residues Thr190–Met210 form a helical membrane-spanning segment. Residues Ala211–Lys231 are Cytoplasmic-facing. The chain crosses the membrane as a helical span at residues Ala232–Leu252. The Extracellular portion of the chain corresponds to Thr253–Ala275. A helical membrane pass occupies residues Ile276–Phe298. Over Thr299–Cys323 the chain is Cytoplasmic.

The protein belongs to the G-protein coupled receptor 1 family.

The protein localises to the cell membrane. Its function is as follows. Receptor for extracellular ADP &gt; UTP &gt; ATP = UDP. The activity of this receptor is mediated by G proteins which activate a phosphatidylinositol-calcium second messenger system. In Gallus gallus (Chicken), this protein is P2Y purinoceptor 3 (P2RY3).